The following is a 917-amino-acid chain: Thiamine biosynthesis bifunctional protein ThiEC (917 aa).

Positions 1–243 (MSNEYPYASM…EGWKAVRGDK (243 aa)) are thiamine-phosphate synthase. 4-amino-2-methyl-5-(diphosphooxymethyl)pyrimidine contacts are provided by residues 48-52 (QLRAK) and D84. Residues D85 and D109 each contribute to the Mg(2+) site. S128 provides a ligand contact to 4-amino-2-methyl-5-(diphosphooxymethyl)pyrimidine. 2-[(2R,5Z)-2-carboxy-4-methylthiazol-5(2H)-ylidene]ethyl phosphate is bound at residue 157–159 (STT). K160 is a 4-amino-2-methyl-5-(diphosphooxymethyl)pyrimidine binding site. 2-[(2R,5Z)-2-carboxy-4-methylthiazol-5(2H)-ylidene]ethyl phosphate contacts are provided by residues G196 and 216-217 (VS). The disordered stretch occupies residues 256–311 (PATDTQAAQEGAAKPGSEATEKKFTNAKDAKDAQKLAKQQRVDIAARGSKQRDKAH). Residues 271 to 917 (GSEATEKKFT…GGKLYSTAQE (647 aa)) form a phosphomethylpyrimidine synthase region. Residues 274–290 (ATEKKFTNAKDAKDAQK) show a composition bias toward basic and acidic residues. 5-amino-1-(5-phospho-beta-D-ribosyl)imidazole contacts are provided by residues N487, M516, Y545, H581, 601 to 603 (SRG), 642 to 645 (DGLR), and E681. H685 lines the Zn(2+) pocket. Y708 serves as a coordination point for 5-amino-1-(5-phospho-beta-D-ribosyl)imidazole. H749 is a Zn(2+) binding site. [4Fe-4S] cluster-binding residues include C829, C832, and C837.

In the N-terminal section; belongs to the thiamine-phosphate synthase family. It in the C-terminal section; belongs to the ThiC family. Requires [4Fe-4S] cluster as cofactor.

The enzyme catalyses 2-[(2R,5Z)-2-carboxy-4-methylthiazol-5(2H)-ylidene]ethyl phosphate + 4-amino-2-methyl-5-(diphosphooxymethyl)pyrimidine + 2 H(+) = thiamine phosphate + CO2 + diphosphate. It carries out the reaction 2-(2-carboxy-4-methylthiazol-5-yl)ethyl phosphate + 4-amino-2-methyl-5-(diphosphooxymethyl)pyrimidine + 2 H(+) = thiamine phosphate + CO2 + diphosphate. The catalysed reaction is 4-methyl-5-(2-phosphooxyethyl)-thiazole + 4-amino-2-methyl-5-(diphosphooxymethyl)pyrimidine + H(+) = thiamine phosphate + diphosphate. It catalyses the reaction 5-amino-1-(5-phospho-beta-D-ribosyl)imidazole + S-adenosyl-L-methionine = 4-amino-2-methyl-5-(phosphooxymethyl)pyrimidine + CO + 5'-deoxyadenosine + formate + L-methionine + 3 H(+). Its pathway is cofactor biosynthesis; thiamine diphosphate biosynthesis; thiamine phosphate from 4-amino-2-methyl-5-diphosphomethylpyrimidine and 4-methyl-5-(2-phosphoethyl)-thiazole: step 1/1. Functionally, condenses 4-methyl-5-(beta-hydroxyethyl)thiazole monophosphate (THZ-P) and 2-methyl-4-amino-5-hydroxymethyl pyrimidine pyrophosphate (HMP-PP) to form thiamine monophosphate (TMP). Catalyzes the synthesis of the hydroxymethylpyrimidine phosphate (HMP-P) moiety of thiamine from aminoimidazole ribotide (AIR) in a radical S-adenosyl-L-methionine (SAM)-dependent reaction. The polypeptide is Thiamine biosynthesis bifunctional protein ThiEC (thiE/thiC) (Bifidobacterium longum (strain NCC 2705)).